A 324-amino-acid polypeptide reads, in one-letter code: Carbonic anhydrase 15 (324 aa).

An N-terminal signal peptide occupies residues 1–18; it reads MWALDFLLSFLLIQLAAQ. Residues 23–293 form the Alpha-carbonic anhydrase domain; the sequence is GTWCYDSQDP…LGGRRISASP (271 aa). Residue H90 is the Proton acceptor of the active site. Zn(2+) is bound by residues H122, H124, and H147. Residue Y155 is part of the active site. N-linked (GlcNAc...) asparagine glycosylation is found at N184, N194, and N203. 231-232 is a substrate binding site; it reads TT. Residues 269–290 are disordered; the sequence is LHPRPLTSNFRPQQPLGGRRIS.

It belongs to the alpha-carbonic anhydrase family. The cofactor is Zn(2+).

The protein localises to the secreted. It catalyses the reaction hydrogencarbonate + H(+) = CO2 + H2O. With respect to regulation, repressed by coumarins. In terms of biological role, reversible hydration of carbon dioxide. This Mus musculus (Mouse) protein is Carbonic anhydrase 15 (Ca15).